A 954-amino-acid polypeptide reads, in one-letter code: Glycine dehydrogenase (decarboxylating) (954 aa).

Over residues 1–13 (MTELLQSLSTQNE) the composition is skewed to polar residues. The interval 1–24 (MTELLQSLSTQNEFVARHNGPNKS) is disordered. Position 704 is an N6-(pyridoxal phosphate)lysine (Lys-704).

Belongs to the GcvP family. The glycine cleavage system is composed of four proteins: P, T, L and H. Pyridoxal 5'-phosphate serves as cofactor.

It carries out the reaction N(6)-[(R)-lipoyl]-L-lysyl-[glycine-cleavage complex H protein] + glycine + H(+) = N(6)-[(R)-S(8)-aminomethyldihydrolipoyl]-L-lysyl-[glycine-cleavage complex H protein] + CO2. The glycine cleavage system catalyzes the degradation of glycine. The P protein binds the alpha-amino group of glycine through its pyridoxal phosphate cofactor; CO(2) is released and the remaining methylamine moiety is then transferred to the lipoamide cofactor of the H protein. The protein is Glycine dehydrogenase (decarboxylating) of Vibrio campbellii (strain ATCC BAA-1116).